Here is a 330-residue protein sequence, read N- to C-terminus: DNA-directed RNA polymerase subunit alpha (330 aa).

Residues 1-237 (MYTEINEMLT…RQLHAFVDMK (237 aa)) are alpha N-terminal domain (alpha-NTD). Residues 251–330 (FDPVLLRSVD…ENWPPASLGE (80 aa)) form an alpha C-terminal domain (alpha-CTD) region.

Belongs to the RNA polymerase alpha chain family. Homodimer. The RNAP catalytic core consists of 2 alpha, 1 beta, 1 beta' and 1 omega subunit. When a sigma factor is associated with the core the holoenzyme is formed, which can initiate transcription.

The catalysed reaction is RNA(n) + a ribonucleoside 5'-triphosphate = RNA(n+1) + diphosphate. Functionally, DNA-dependent RNA polymerase catalyzes the transcription of DNA into RNA using the four ribonucleoside triphosphates as substrates. The protein is DNA-directed RNA polymerase subunit alpha of Legionella pneumophila subsp. pneumophila (strain Philadelphia 1 / ATCC 33152 / DSM 7513).